We begin with the raw amino-acid sequence, 163 residues long: Cytochrome c-type biogenesis protein CcmE (163 aa).

Topologically, residues 1–7 are cytoplasmic; the sequence is MTRKQRR. A helical; Signal-anchor for type II membrane protein membrane pass occupies residues 8–28; the sequence is LVFIGTCGAVLAVALGLVLWA. The Periplasmic segment spans residues 29-163; the sequence is MSGTIVFFRS…RTASGEARAP (135 aa). Residues His122 and Tyr126 each contribute to the heme site. The interval 134–163 is disordered; sequence ALKKSGRWQEGAGHPAPAPPRTASGEARAP.

It belongs to the CcmE/CycJ family.

The protein localises to the cell inner membrane. Functionally, heme chaperone required for the biogenesis of c-type cytochromes. Transiently binds heme delivered by CcmC and transfers the heme to apo-cytochromes in a process facilitated by CcmF and CcmH. The sequence is that of Cytochrome c-type biogenesis protein CcmE from Methylobacterium sp. (strain 4-46).